The sequence spans 107 residues: ATP-dependent Clp protease adapter protein ClpS (107 aa).

Residues 1-20 (MAQKHEHDTSVITESAPKQK) are disordered.

It belongs to the ClpS family. As to quaternary structure, binds to the N-terminal domain of the chaperone ClpA.

Functionally, involved in the modulation of the specificity of the ClpAP-mediated ATP-dependent protein degradation. This Myxococcus xanthus (strain DK1622) protein is ATP-dependent Clp protease adapter protein ClpS.